The chain runs to 308 residues: Ribosomal RNA large subunit methyltransferase F (308 aa).

It belongs to the methyltransferase superfamily. METTL16/RlmF family.

It localises to the cytoplasm. The catalysed reaction is adenosine(1618) in 23S rRNA + S-adenosyl-L-methionine = N(6)-methyladenosine(1618) in 23S rRNA + S-adenosyl-L-homocysteine + H(+). Functionally, specifically methylates the adenine in position 1618 of 23S rRNA. This chain is Ribosomal RNA large subunit methyltransferase F, found in Shigella dysenteriae serotype 1 (strain Sd197).